A 361-amino-acid polypeptide reads, in one-letter code: Myricetin 3-O-methyltransferase 3 (361 aa).

Position 229 (Asp229) interacts with S-adenosyl-L-methionine. His267 serves as the catalytic Proton acceptor.

Belongs to the class I-like SAM-binding methyltransferase superfamily. Cation-independent O-methyltransferase family. Homodimer. Mainly expressed in leaves secreting glandular trichomes types 1 and 4 and, to a lesser extent, in storage trichomes type 6.

It catalyses the reaction kaempferol + S-adenosyl-L-methionine = 3-O-methylkaempferol + S-adenosyl-L-homocysteine + H(+). It carries out the reaction quercetin + S-adenosyl-L-methionine = 3',4',5,7-tetrahydroxy-3-methoxyflavone + S-adenosyl-L-homocysteine + H(+). The enzyme catalyses myricetin + S-adenosyl-L-methionine = 3-O-methylmyricetin + S-adenosyl-L-homocysteine + H(+). The catalysed reaction is kaempferide + S-adenosyl-L-methionine = 3,4'-O-dimethylkaempferol + S-adenosyl-L-homocysteine + H(+). It catalyses the reaction isorhamnetin + S-adenosyl-L-methionine = 3,3'-O-dimethylquercetin + S-adenosyl-L-homocysteine + H(+). It carries out the reaction rhamnetin + S-adenosyl-L-methionine = 3',4',5-trihydroxy-3,7-dimethoxyflavone + S-adenosyl-L-homocysteine + H(+). The enzyme catalyses laricitrin + S-adenosyl-L-methionine = 3,3'-O-dimethylmyricetin + S-adenosyl-L-homocysteine + H(+). The catalysed reaction is syringetin + S-adenosyl-L-methionine = 3,3',5'-O-trimethylmyricetin + S-adenosyl-L-homocysteine + H(+). It participates in flavonoid metabolism. In terms of biological role, flavonoid 3-O-methyltransferase involved in the biosynthesis of polymethoxylated flavonoids natural products such as myricetin derivatives, aroma compounds possessing antioxidant properties and exhibiting pharmacological activities such as anti-carcinogen, anti-viral, anti-thrombotic, anti-diabetic, anti-atherosclerotic, and anti-inflammatory effects. Catalyzes S-adenosylmethionine-dependent regioselective 3-O-methylation of flavonoids; active on various hydroxylated flavonoid substrates. Active with myricetin, quercetin, kaempferol, 4'-methyl kaempferol (kaempferide), 3'-methyl quercetin (isorhamnetin), 7-methyl quercetin (rhamnetin), 3'-methyl myricetin (laricitrin) and 3',5'-dimethyl myricetin (syringetin), thus producing 3-methyl myricetin, 3-methyl quercetin, 3-methyl kaempferol, 4',3-methyl kaempferol, 3',3-methyl quercetin, 7,3-dimethyl quercetin, 3',3-dimethyl myricetin and 3',5',3-dimethyl myricetin, respectively. Inactive with flavonol substrates methylated at the 3-hydroxyl position such as 3-O-methyl quercetin. The chain is Myricetin 3-O-methyltransferase 3 from Solanum habrochaites (Wild tomato).